Here is a 312-residue protein sequence, read N- to C-terminus: Pyrimidine-specific ribonucleoside hydrolase RihA (312 aa).

H240 is a catalytic residue.

It belongs to the IUNH family. RihA subfamily.

Hydrolyzes cytidine or uridine to ribose and cytosine or uracil, respectively. The sequence is that of Pyrimidine-specific ribonucleoside hydrolase RihA from Citrobacter koseri (strain ATCC BAA-895 / CDC 4225-83 / SGSC4696).